The following is a 509-amino-acid chain: Aspartyl/glutamyl-tRNA(Asn/Gln) amidotransferase subunit B (509 aa).

This sequence belongs to the GatB/GatE family. GatB subfamily. As to quaternary structure, heterotrimer of A, B and C subunits.

The enzyme catalyses L-glutamyl-tRNA(Gln) + L-glutamine + ATP + H2O = L-glutaminyl-tRNA(Gln) + L-glutamate + ADP + phosphate + H(+). It catalyses the reaction L-aspartyl-tRNA(Asn) + L-glutamine + ATP + H2O = L-asparaginyl-tRNA(Asn) + L-glutamate + ADP + phosphate + 2 H(+). Allows the formation of correctly charged Asn-tRNA(Asn) or Gln-tRNA(Gln) through the transamidation of misacylated Asp-tRNA(Asn) or Glu-tRNA(Gln) in organisms which lack either or both of asparaginyl-tRNA or glutaminyl-tRNA synthetases. The reaction takes place in the presence of glutamine and ATP through an activated phospho-Asp-tRNA(Asn) or phospho-Glu-tRNA(Gln). The chain is Aspartyl/glutamyl-tRNA(Asn/Gln) amidotransferase subunit B from Mycobacterium leprae (strain Br4923).